The chain runs to 410 residues: DNA replication and repair protein RecF (410 aa).

Position 30-37 (30-37) interacts with ATP; the sequence is GPNGHGKT.

Belongs to the RecF family.

It is found in the cytoplasm. In terms of biological role, the RecF protein is involved in DNA metabolism; it is required for DNA replication and normal SOS inducibility. RecF binds preferentially to single-stranded, linear DNA. It also seems to bind ATP. This is DNA replication and repair protein RecF from Rhodococcus jostii (strain RHA1).